A 413-amino-acid polypeptide reads, in one-letter code: Histidine--tRNA ligase (413 aa).

This sequence belongs to the class-II aminoacyl-tRNA synthetase family. Homodimer.

It is found in the cytoplasm. The enzyme catalyses tRNA(His) + L-histidine + ATP = L-histidyl-tRNA(His) + AMP + diphosphate + H(+). In Ehrlichia chaffeensis (strain ATCC CRL-10679 / Arkansas), this protein is Histidine--tRNA ligase.